We begin with the raw amino-acid sequence, 224 residues long: MIYREDSRRNTIGVLDLQGGVCEHLEHLERLGIACKRVKEPLDFEGVAGLILPGGESTCLSRLIRIFHLEGCILDAFQKGMKIWGTCAGAILLATGILGERPHLGLIDMDIERNGFGSQLDSFCIEAALPELSADPVPLTFIRAPKIRRVGSDVRILLQLQDYIVAAENDRVLVTVFHPELTPCIVFHKHFVHKCGICCTPEDDLADSDAQWNSRSWMRLAPHV.

An L-glutamine-binding site is contributed by 55-57; it reads GES. Catalysis depends on C87, which acts as the Nucleophile. L-glutamine contacts are provided by residues R113 and 142–143; that span reads IR. Catalysis depends on charge relay system residues H178 and E180.

This sequence belongs to the glutaminase PdxT/SNO family. In terms of assembly, in the presence of PdxS, forms a dodecamer of heterodimers. Only shows activity in the heterodimer.

It catalyses the reaction aldehydo-D-ribose 5-phosphate + D-glyceraldehyde 3-phosphate + L-glutamine = pyridoxal 5'-phosphate + L-glutamate + phosphate + 3 H2O + H(+). It carries out the reaction L-glutamine + H2O = L-glutamate + NH4(+). It functions in the pathway cofactor biosynthesis; pyridoxal 5'-phosphate biosynthesis. Its function is as follows. Catalyzes the hydrolysis of glutamine to glutamate and ammonia as part of the biosynthesis of pyridoxal 5'-phosphate. The resulting ammonia molecule is channeled to the active site of PdxS. In Syntrophus aciditrophicus (strain SB), this protein is Pyridoxal 5'-phosphate synthase subunit PdxT.